The following is a 450-amino-acid chain: Chromosomal replication initiator protein DnaA (450 aa).

Positions M1–Q84 are domain I, interacts with DnaA modulators. The segment at Q84–S111 is domain II. A disordered region spans residues L89–F108. Residues M112–S328 form a domain III, AAA+ region region. Positions 156, 158, 159, and 160 each coordinate ATP. The segment at S329–L450 is domain IV, binds dsDNA.

It belongs to the DnaA family. As to quaternary structure, oligomerizes as a right-handed, spiral filament on DNA at oriC.

The protein localises to the cytoplasm. Functionally, plays an essential role in the initiation and regulation of chromosomal replication. ATP-DnaA binds to the origin of replication (oriC) to initiate formation of the DNA replication initiation complex once per cell cycle. Binds the DnaA box (a 9 base pair repeat at the origin) and separates the double-stranded (ds)DNA. Forms a right-handed helical filament on oriC DNA; dsDNA binds to the exterior of the filament while single-stranded (ss)DNA is stabiized in the filament's interior. The ATP-DnaA-oriC complex binds and stabilizes one strand of the AT-rich DNA unwinding element (DUE), permitting loading of DNA polymerase. After initiation quickly degrades to an ADP-DnaA complex that is not apt for DNA replication. Binds acidic phospholipids. The sequence is that of Chromosomal replication initiator protein DnaA from Geobacillus kaustophilus (strain HTA426).